We begin with the raw amino-acid sequence, 123 residues long: Large ribosomal subunit protein uL14c (123 aa).

Belongs to the universal ribosomal protein uL14 family. As to quaternary structure, part of the 50S ribosomal subunit. Interacts with IOJAP.

It is found in the plastid. It localises to the chloroplast. In terms of biological role, binds to 23S rRNA. This chain is Large ribosomal subunit protein uL14c, found in Zea mays (Maize).